The primary structure comprises 584 residues: Aspartate--tRNA(Asp/Asn) ligase (584 aa).

Position 174 (E174) interacts with L-aspartate. The segment at 198-201 (QLFK) is aspartate. R220 serves as a coordination point for L-aspartate. Residues 220–222 (RDE) and Q229 each bind ATP. H447 lines the L-aspartate pocket. E480 serves as a coordination point for ATP. Residue R487 coordinates L-aspartate. 532-535 (GFDR) serves as a coordination point for ATP.

This sequence belongs to the class-II aminoacyl-tRNA synthetase family. Type 1 subfamily. In terms of assembly, homodimer.

The protein resides in the cytoplasm. It carries out the reaction tRNA(Asx) + L-aspartate + ATP = L-aspartyl-tRNA(Asx) + AMP + diphosphate. Its function is as follows. Aspartyl-tRNA synthetase with relaxed tRNA specificity since it is able to aspartylate not only its cognate tRNA(Asp) but also tRNA(Asn). Reaction proceeds in two steps: L-aspartate is first activated by ATP to form Asp-AMP and then transferred to the acceptor end of tRNA(Asp/Asn). The polypeptide is Aspartate--tRNA(Asp/Asn) ligase (Endomicrobium trichonymphae).